Here is a 444-residue protein sequence, read N- to C-terminus: Trimethylamine monooxygenase (444 aa).

Residues cysteine 12, glutamate 37, glutamine 39, leucine 45, and tryptophan 46 each contribute to the FAD site. Residues tryptophan 70 and asparagine 72 each coordinate NADP(+). Residues asparagine 72 and valine 125 each coordinate FAD. The NADP(+) site is built by tyrosine 170, serine 202, serine 203, serine 205, arginine 226, histidine 227, and asparagine 288. Positions 315 and 318 each coordinate FAD. Residue arginine 409 coordinates NADP(+).

The protein belongs to the FMO family. Homodimer. FAD serves as cofactor.

The catalysed reaction is trimethylamine + NADPH + O2 = trimethylamine N-oxide + NADP(+) + H2O. Its function is as follows. Catalyzes the oxidation of trimethylamine (TMA) to produce trimethylamine N-oxide (TMAO). In vitro, has a broad substrate specificity, oxidizing many nitrogen- and sulfur-containing compounds, including dimethylamine (DMA), dimethylsulfide (DMS), dimethylsulfoxide (DMSO) and methimazole. TMA shows the highest affinity. This chain is Trimethylamine monooxygenase, found in Pelagibacter sp. (strain HTCC7211).